The sequence spans 473 residues: Bifunctional protein GlmU (473 aa).

The interval 1–241 (MATQPTPLTA…VGSLVGINDR (241 aa)) is pyrophosphorylase. UDP-N-acetyl-alpha-D-glucosamine-binding positions include 13-16 (LAAG), lysine 27, glutamine 84, and 89-90 (GT). Residue aspartate 114 coordinates Mg(2+). UDP-N-acetyl-alpha-D-glucosamine contacts are provided by glycine 152, glutamate 167, asparagine 182, and asparagine 239. Asparagine 239 contributes to the Mg(2+) binding site. The tract at residues 242 to 262 (AQLAAAEEVLYGRIADRLRKS) is linker. The tract at residues 263–473 (GVTIRTSARI…KARLKDAAKK (211 aa)) is N-acetyltransferase. Residues arginine 343 and lysine 361 each coordinate UDP-N-acetyl-alpha-D-glucosamine. Histidine 373 acts as the Proton acceptor in catalysis. Positions 376 and 387 each coordinate UDP-N-acetyl-alpha-D-glucosamine. Acetyl-CoA-binding positions include alanine 390, 396 to 397 (NY), serine 415, threonine 433, and arginine 450.

In the N-terminal section; belongs to the N-acetylglucosamine-1-phosphate uridyltransferase family. This sequence in the C-terminal section; belongs to the transferase hexapeptide repeat family. As to quaternary structure, homotrimer. Requires Mg(2+) as cofactor.

It is found in the cytoplasm. The enzyme catalyses alpha-D-glucosamine 1-phosphate + acetyl-CoA = N-acetyl-alpha-D-glucosamine 1-phosphate + CoA + H(+). The catalysed reaction is N-acetyl-alpha-D-glucosamine 1-phosphate + UTP + H(+) = UDP-N-acetyl-alpha-D-glucosamine + diphosphate. The protein operates within nucleotide-sugar biosynthesis; UDP-N-acetyl-alpha-D-glucosamine biosynthesis; N-acetyl-alpha-D-glucosamine 1-phosphate from alpha-D-glucosamine 6-phosphate (route II): step 2/2. It functions in the pathway nucleotide-sugar biosynthesis; UDP-N-acetyl-alpha-D-glucosamine biosynthesis; UDP-N-acetyl-alpha-D-glucosamine from N-acetyl-alpha-D-glucosamine 1-phosphate: step 1/1. Its pathway is bacterial outer membrane biogenesis; LPS lipid A biosynthesis. Catalyzes the last two sequential reactions in the de novo biosynthetic pathway for UDP-N-acetylglucosamine (UDP-GlcNAc). The C-terminal domain catalyzes the transfer of acetyl group from acetyl coenzyme A to glucosamine-1-phosphate (GlcN-1-P) to produce N-acetylglucosamine-1-phosphate (GlcNAc-1-P), which is converted into UDP-GlcNAc by the transfer of uridine 5-monophosphate (from uridine 5-triphosphate), a reaction catalyzed by the N-terminal domain. The chain is Bifunctional protein GlmU from Sorangium cellulosum (strain So ce56) (Polyangium cellulosum (strain So ce56)).